The sequence spans 134 residues: Methylglyoxal synthase (134 aa).

Positions 1–134 (MVNLNIALIA…GLLEWRNAVK (134 aa)) constitute an MGS-like domain. Substrate is bound by residues His11, Lys15, and 37-40 (TGAT). The active-site Proton donor/acceptor is the Asp63. His90 contacts substrate.

It belongs to the methylglyoxal synthase family.

The catalysed reaction is dihydroxyacetone phosphate = methylglyoxal + phosphate. In terms of biological role, catalyzes the formation of methylglyoxal from dihydroxyacetone phosphate. This is Methylglyoxal synthase from Thermoanaerobacterium thermosaccharolyticum (Clostridium thermosaccharolyticum).